The sequence spans 328 residues: tRNA dimethylallyltransferase (328 aa).

An ATP-binding site is contributed by 23–30 (GPTASGKS). 25 to 30 (TASGKS) provides a ligand contact to substrate. Residues 48–51 (DSMQ) form an interaction with substrate tRNA region.

This sequence belongs to the IPP transferase family. Monomer. Requires Mg(2+) as cofactor.

The catalysed reaction is adenosine(37) in tRNA + dimethylallyl diphosphate = N(6)-dimethylallyladenosine(37) in tRNA + diphosphate. In terms of biological role, catalyzes the transfer of a dimethylallyl group onto the adenine at position 37 in tRNAs that read codons beginning with uridine, leading to the formation of N6-(dimethylallyl)adenosine (i(6)A). This Rhodopseudomonas palustris (strain BisA53) protein is tRNA dimethylallyltransferase.